Consider the following 719-residue polypeptide: Photosystem I P700 chlorophyll a apoprotein A1 (719 aa).

8 helical membrane passes run 61–84 (VFSA…FHGA), 147–170 (LYCT…FHYH), 186–210 (LNHH…HVSL), 282–300 (TAHH…GHMY), 337–360 (WHAQ…HHMY), 376–402 (LSLF…IFMV), 424–446 (AIVS…LYIH), and 522–540 (FLVH…LILL). [4Fe-4S] cluster-binding residues include Cys564 and Cys573. Transmembrane regions (helical) follow at residues 580 to 601 (HVFL…HFSW) and 655 to 677 (LSAY…MFLF). A chlorophyll a'-binding site is contributed by His666. Residues Met674 and Tyr682 each coordinate chlorophyll a. Trp683 is a binding site for phylloquinone. The helical transmembrane segment at 715–719 (AVGVA) threads the bilayer.

Belongs to the PsaA/PsaB family. In terms of assembly, the PsaA/B heterodimer binds the P700 chlorophyll special pair and subsequent electron acceptors. PSI consists of a core antenna complex that captures photons, and an electron transfer chain that converts photonic excitation into a charge separation. The eukaryotic PSI reaction center is composed of at least 11 subunits. The cofactor is P700 is a chlorophyll a/chlorophyll a' dimer, A0 is one or more chlorophyll a, A1 is one or both phylloquinones and FX is a shared 4Fe-4S iron-sulfur center..

The protein localises to the plastid. Its subcellular location is the chloroplast thylakoid membrane. The enzyme catalyses reduced [plastocyanin] + hnu + oxidized [2Fe-2S]-[ferredoxin] = oxidized [plastocyanin] + reduced [2Fe-2S]-[ferredoxin]. Its function is as follows. PsaA and PsaB bind P700, the primary electron donor of photosystem I (PSI), as well as the electron acceptors A0, A1 and FX. PSI is a plastocyanin-ferredoxin oxidoreductase, converting photonic excitation into a charge separation, which transfers an electron from the donor P700 chlorophyll pair to the spectroscopically characterized acceptors A0, A1, FX, FA and FB in turn. Oxidized P700 is reduced on the lumenal side of the thylakoid membrane by plastocyanin. The protein is Photosystem I P700 chlorophyll a apoprotein A1 of Torreya californica (California nutmeg).